The primary structure comprises 126 residues: Glycerol dehydrogenase small subunit (126 aa).

The next 4 helical transmembrane spans lie at Trp-13 to Gly-33, Gly-41 to Met-61, Ala-67 to Phe-87, and Leu-92 to Val-112.

The protein resides in the cell membrane. It carries out the reaction glycerol + A = dihydroxyacetone + AH2. Its function is as follows. Catalyzes the oxidation of glycerol to glycerone. Also acts, more slowly, on a number of other polyols including D-sorbitol, D-arabinitol, D-mannitol, meso-erythritol, adonitol and propylene glycol. The protein is Glycerol dehydrogenase small subunit (sldB) of Gluconobacter oxydans (strain 621H) (Gluconobacter suboxydans).